The following is a 21-amino-acid chain: Bombinin-H4 (21 aa).

A D-allo-isoleucine modification is found at I2. At I20 the chain carries Isoleucine amide.

Belongs to the bombinin family. As to expression, expressed by the skin glands.

The protein resides in the secreted. Functionally, has antimicrobial and hemolytic activities. In Bombina variegata (Yellow-bellied toad), this protein is Bombinin-H4.